The primary structure comprises 473 residues: Cysteine--tRNA ligase (473 aa).

Cysteine 28 contacts Zn(2+). The short motif at 30–40 (MTVYDFCHIGH) is the 'HIGH' region element. Zn(2+) contacts are provided by cysteine 212, histidine 237, and glutamate 241. The 'KMSKS' region signature appears at 277–281 (KMSKS). Residue lysine 280 participates in ATP binding.

This sequence belongs to the class-I aminoacyl-tRNA synthetase family. As to quaternary structure, monomer. Zn(2+) is required as a cofactor.

It is found in the cytoplasm. The enzyme catalyses tRNA(Cys) + L-cysteine + ATP = L-cysteinyl-tRNA(Cys) + AMP + diphosphate. The polypeptide is Cysteine--tRNA ligase (Polynucleobacter necessarius subsp. necessarius (strain STIR1)).